A 621-amino-acid chain; its full sequence is Probable bifunctional dTTP/UTP pyrophosphatase/methyltransferase protein (621 aa).

The tract at residues 11 to 223 (LHKRVVLASA…PPRPEDLRRS (213 aa)) is MAF-like. S21 carries the post-translational modification Phosphoserine. The active-site Proton acceptor; for pyrophosphatase activity is the D88. The residue at position 228 (S228) is a Phosphoserine. Residue T234 is modified to Phosphothreonine. The segment at 235-279 (FEDLSDVEGGGSEPTQRDAGSRDEKAEAGEAGQATAEAECHRTRE) is disordered. A Phosphoserine modification is found at S239. Over residues 249–262 (TQRDAGSRDEKAEA) the composition is skewed to basic and acidic residues. The tract at residues 277–621 (TRETLPPFPT…DAILATKVAP (345 aa)) is ASMT-like. S421 carries the post-translational modification Phosphoserine. S-adenosyl-L-methionine contacts are provided by residues D482, 508 to 510 (GDF), and R525.

It in the N-terminal section; belongs to the Maf family. YhdE subfamily. In the C-terminal section; belongs to the class I-like SAM-binding methyltransferase superfamily. Cation-independent O-methyltransferase family. Homodimer. A divalent metal cation is required as a cofactor. As to expression, widely expressed. In adult, highly expressed in pancreas, placenta, fibroblast, thymus, prostate, testis, ovary and colon. Expressed at lower levels in spleen, small intestine and leukocytes. In fetus, expressed at high levels in the lung and kidney and at lower level in brain and liver.

The catalysed reaction is dTTP + H2O = dTMP + diphosphate + H(+). The enzyme catalyses UTP + H2O = UMP + diphosphate + H(+). It carries out the reaction CTP + H2O = CMP + diphosphate + H(+). It catalyses the reaction psi-UTP + H2O = psi-UMP + diphosphate + H(+). The catalysed reaction is 5-methyl-UTP + H2O = 5-methyl-UMP + diphosphate + H(+). The enzyme catalyses 5-methyl-CTP + H2O = 5-methyl-CMP + diphosphate + H(+). In terms of biological role, nucleoside triphosphate pyrophosphatase that hydrolyzes dTTP and UTP. Can also hydrolyze CTP and the modified nucleotides pseudo-UTP, 5-methyl-UTP (m(5)UTP) and 5-methyl-CTP (m(5)CTP). Has weak activity with dCTP, 8-oxo-GTP and N(4)-methyl-dCTP. May have a dual role in cell division arrest and in preventing the incorporation of modified nucleotides into cellular nucleic acids. In addition, the presence of the putative catalytic domain of S-adenosyl-L-methionine binding in the C-terminal region argues for a methyltransferase activity. The polypeptide is Probable bifunctional dTTP/UTP pyrophosphatase/methyltransferase protein (ASMTL) (Homo sapiens (Human)).